A 246-amino-acid chain; its full sequence is Octanoyltransferase (246 aa).

The BPL/LPL catalytic domain occupies 46-234; sequence GTAGEMVWLV…AFEEVFGAAE (189 aa). Substrate contacts are provided by residues 85-92, 165-167, and 178-180; these read RGGEYTYH, AIG, and GIA. The active-site Acyl-thioester intermediate is the Cys-196.

This sequence belongs to the LipB family.

It is found in the cytoplasm. The catalysed reaction is octanoyl-[ACP] + L-lysyl-[protein] = N(6)-octanoyl-L-lysyl-[protein] + holo-[ACP] + H(+). It participates in protein modification; protein lipoylation via endogenous pathway; protein N(6)-(lipoyl)lysine from octanoyl-[acyl-carrier-protein]: step 1/2. Its function is as follows. Catalyzes the transfer of endogenously produced octanoic acid from octanoyl-acyl-carrier-protein onto the lipoyl domains of lipoate-dependent enzymes. Lipoyl-ACP can also act as a substrate although octanoyl-ACP is likely to be the physiological substrate. This is Octanoyltransferase from Chelativorans sp. (strain BNC1).